The chain runs to 231 residues: 2-C-methyl-D-erythritol 4-phosphate cytidylyltransferase (231 aa).

It belongs to the IspD/TarI cytidylyltransferase family. IspD subfamily. Homodimer.

It carries out the reaction 2-C-methyl-D-erythritol 4-phosphate + CTP + H(+) = 4-CDP-2-C-methyl-D-erythritol + diphosphate. It functions in the pathway isoprenoid biosynthesis; isopentenyl diphosphate biosynthesis via DXP pathway; isopentenyl diphosphate from 1-deoxy-D-xylulose 5-phosphate: step 2/6. Its function is as follows. Catalyzes the formation of 4-diphosphocytidyl-2-C-methyl-D-erythritol from CTP and 2-C-methyl-D-erythritol 4-phosphate (MEP). The sequence is that of 2-C-methyl-D-erythritol 4-phosphate cytidylyltransferase from Citrobacter koseri (strain ATCC BAA-895 / CDC 4225-83 / SGSC4696).